Consider the following 155-residue polypeptide: MAKLAVIRIRGRVNVKRPVRDTLAMLRLHRVNHCVIVDDTPSYLGMLQKAKDYITWGEINAETLAKLIRKRGRLIGNKPVTDEYVKEKLGMTIEEFAQKVINGEMSLKDLPNLKPVFRLHPPRGGFRGSKKRSFKEGGALGYRGEKINDLIERML.

Belongs to the universal ribosomal protein uL30 family. In terms of assembly, part of the 50S ribosomal subunit.

This is Large ribosomal subunit protein uL30 from Pyrococcus abyssi (strain GE5 / Orsay).